We begin with the raw amino-acid sequence, 79 residues long: MKCKKQLLVIFFAYFLVVNESEAIFGSLFSLGSKLLPSVFKLFSRKKQRALMKRDLEDIMDPYQKNLKLDRYLRRLAMD.

A signal peptide spans 1-23 (MKCKKQLLVIFFAYFLVVNESEA). Residues 49-79 (RALMKRDLEDIMDPYQKNLKLDRYLRRLAMD) constitute a propeptide that is removed on maturation.

This sequence belongs to the non-disulfide-bridged peptide (NDBP) superfamily. Medium-length antimicrobial peptide (group 3) family. Ponericin-W subfamily. Expressed by the venom gland.

The protein localises to the secreted. Its subcellular location is the target cell membrane. In terms of biological role, antimicrobial peptide with potent activity against a range of Gram-positive and Gram-negative bacteria. Has high hemolytic activity against erythrocytes. May act by disrupting the integrity of the bacterial cell membrane. In Lychas mucronatus (Chinese swimming scorpion), this protein is Ponericin-W-like 32.1.